A 423-amino-acid polypeptide reads, in one-letter code: CinA-like protein (423 aa).

The protein belongs to the CinA family.

The sequence is that of CinA-like protein from Chlorobaculum tepidum (strain ATCC 49652 / DSM 12025 / NBRC 103806 / TLS) (Chlorobium tepidum).